Consider the following 317-residue polypeptide: Transcription initiation factor IIB 3 (317 aa).

Over residues 1–14 (MERATREREKEQRE) the composition is skewed to basic and acidic residues. A disordered region spans residues 1–25 (MERATREREKEQREQAQTNDEAQQC). The TFIIB-type zinc finger occupies 21-50 (EAQQCPECNSANVITDQSERVCEDCGLVLE). Residues Cys25, Cys28, Cys42, and Cys45 each contribute to the Zn(2+) site. Residues 62–83 (AFNSSERDQKSRVGAPTTKTMH) are disordered. Tandem repeats lie at residues 136 to 219 (SEID…AQEL) and 230 to 311 (EYLP…EQIE).

The protein belongs to the TFIIB family.

Its function is as follows. Stabilizes TBP binding to an archaeal box-A promoter. Also responsible for recruiting RNA polymerase II to the pre-initiation complex (DNA-TBP-TFIIB). The protein is Transcription initiation factor IIB 3 of Halobacterium salinarum (strain ATCC 700922 / JCM 11081 / NRC-1) (Halobacterium halobium).